Consider the following 343-residue polypeptide: tRNA-specific 2-thiouridylase MnmA 2 (343 aa).

ATP contacts are provided by residues 7-14 and leucine 33; that span reads GMSGGVDS. The active-site Nucleophile is cysteine 91. Cysteine 91 and cysteine 189 are oxidised to a cystine. An ATP-binding site is contributed by glycine 115. The segment at 139 to 141 is interaction with tRNA; sequence KDQ. Cysteine 189 (cysteine persulfide intermediate) is an active-site residue.

It belongs to the MnmA/TRMU family.

The protein resides in the cytoplasm. It catalyses the reaction S-sulfanyl-L-cysteinyl-[protein] + uridine(34) in tRNA + AH2 + ATP = 2-thiouridine(34) in tRNA + L-cysteinyl-[protein] + A + AMP + diphosphate + H(+). Its function is as follows. Catalyzes the 2-thiolation of uridine at the wobble position (U34) of tRNA, leading to the formation of s(2)U34. This Fusobacterium nucleatum subsp. nucleatum (strain ATCC 25586 / DSM 15643 / BCRC 10681 / CIP 101130 / JCM 8532 / KCTC 2640 / LMG 13131 / VPI 4355) protein is tRNA-specific 2-thiouridylase MnmA 2.